The sequence spans 157 residues: Multidrug resistance efflux pump SepA (157 aa).

Helical transmembrane passes span 18-38 (IVLF…GFGL), 63-83 (LLYY…VEHL), 100-120 (ATFH…IIHL), and 122-142 (YVYI…LYVC).

The protein belongs to the multidrug resistance efflux pump SepA family.

It localises to the cell membrane. Involved in multidrug efflux. This Staphylococcus aureus (strain bovine RF122 / ET3-1) protein is Multidrug resistance efflux pump SepA (sepA).